Consider the following 193-residue polypeptide: Sarcoplasmic calcium-binding protein, alpha chain (193 aa).

IgE-binding epitope stretches follow at residues 10–36 (KYVV…LAVR) and 49–72 (DAYA…ADFN). 3 consecutive EF-hand domains span residues 16-40 (MYDI…NTLI), 57-92 (IMRN…HCQG), and 101-136 (AFKV…RSAF). Ca(2+) is bound by residues D18, D20, N22, D29, D70, N72, D74, E76, E81, D114, N116, D118, K120, and E125. The tract at residues 130–147 (CITRSAFAEVKEIDDAYN) is igE-binding epitope.

SCPs from crayfish, lobster, and shrimp are polymorphic dimers; three isotypes (alpha-alpha, alpha-beta, and beta-beta) have been identified. As to expression, expressed in tail muscle (at protein level).

Its function is as follows. Like parvalbumins, SCPs seem to be more abundant in fast contracting muscles, but no functional relationship can be established from this distribution. This is Sarcoplasmic calcium-binding protein, alpha chain from Penaeus vannamei (Whiteleg shrimp).